Consider the following 353-residue polypeptide: Stachydrine N-demethylase reductase subunit Stc4 (353 aa).

An FAD-binding FR-type domain is found at 11-114 (SDAEPLECVT…IGPAGKFSIV (104 aa)). The region spanning 269–353 (AEIAFALSGV…KPLRRVSVEA (85 aa)) is the 2Fe-2S ferredoxin-type domain. [2Fe-2S] cluster contacts are provided by Cys303, Cys308, Cys311, and Cys341.

It in the N-terminal section; belongs to the FAD-binding oxidoreductase type 6 family. As to quaternary structure, the system is probably composed of an oxygenase subunit (Stc2) and two reductase subunits (Stc3 and Stc4). The cofactor is FAD. Requires [2Fe-2S] cluster as cofactor.

Reductase involved in the catabolism of stachydrine (L-proline betaine), a source of carbon and nitrogen. Part of a Rieske-type oxygenase system that catalyzes the demethylation of stachydrine to produce N-methyl-L-proline (monomethylproline). This subunit is probably involved in the transfer of electrons from NAD(P)H to the catalytic subunit Stc2. This is Stachydrine N-demethylase reductase subunit Stc4 from Rhizobium meliloti (strain 1021) (Ensifer meliloti).